The sequence spans 222 residues: Riboflavin kinase (222 aa).

The H-T-H motif-like stretch occupies residues 1-92; it reads MVLAEDLECL…CRLFAHEGGH (92 aa). Residues 93 to 222 are riboflavin kinase; sequence YTLPGIVISG…DRVNVEVAYD (130 aa). Residue 102–107 coordinates CDP; the sequence is GLGEGR. The Mg(2+) site is built by threonine 131 and asparagine 133. 2 residues coordinate FMN: serine 188 and glutamate 196. 201-204 contributes to the CDP binding site; that stretch reads VGLR.

Belongs to the archaeal riboflavin kinase family. It depends on Mg(2+) as a cofactor.

It catalyses the reaction riboflavin + CTP = CDP + FMN + H(+). The protein operates within cofactor biosynthesis; FMN biosynthesis; FMN from riboflavin (CTP route): step 1/1. In terms of biological role, catalyzes the CTP-dependent phosphorylation of riboflavin (vitamin B2) to form flavin mononucleotide (FMN). This Methanoregula boonei (strain DSM 21154 / JCM 14090 / 6A8) protein is Riboflavin kinase (ribK).